The chain runs to 249 residues: DNA repair protein RecO (249 aa).

Belongs to the RecO family.

In terms of biological role, involved in DNA repair and RecF pathway recombination. This is DNA repair protein RecO from Exiguobacterium sibiricum (strain DSM 17290 / CCUG 55495 / CIP 109462 / JCM 13490 / 255-15).